The sequence spans 271 residues: Protein phosphatase 1 regulatory subunit 3B-B (271 aa).

The PP1-binding motif signature appears at 56-59 (RVSF). One can recognise a CBM21 domain in the interval 119-227 (RNRLKADSVC…SNKGLNYRIV (109 aa)).

Interacts with glycogen, PPP1CC catalytic subunit of PP1 and PYGL. Associates with glycogen particles. Forms complexes with debranching enzyme, glycogen phosphorylase, glycogen synthase and phosphorylase kinase which is necessary for its regulation of PP1 activity.

In terms of biological role, acts as a glycogen-targeting subunit for phosphatase PP1. Facilitates interaction of the PP1 with enzymes of the glycogen metabolism and regulates its activity. Suppresses the rate at which PP1 dephosphorylates (inactivates) glycogen phosphorylase and enhances the rate at which it activates glycogen synthase and therefore limits glycogen breakdown. This Xenopus laevis (African clawed frog) protein is Protein phosphatase 1 regulatory subunit 3B-B (ppp1r3b-b).